We begin with the raw amino-acid sequence, 550 residues long: Hydroxylamine reductase (550 aa).

Residues Cys-3, Cys-6, Cys-18, and Cys-25 each coordinate [2Fe-2S] cluster. 8 residues coordinate hybrid [4Fe-2O-2S] cluster: His-249, Glu-273, Cys-317, Cys-405, Cys-433, Cys-458, Glu-492, and Lys-494. Cys-405 carries the post-translational modification Cysteine persulfide.

Belongs to the HCP family. The cofactor is [2Fe-2S] cluster. It depends on hybrid [4Fe-2O-2S] cluster as a cofactor.

It localises to the cytoplasm. It catalyses the reaction A + NH4(+) + H2O = hydroxylamine + AH2 + H(+). With respect to regulation, inhibited by oxygen. Activated by cyanide except in the prolonged presence of excess cyanide, where the enzyme is inactivated. Functionally, catalyzes the reduction of hydroxylamine to form NH(3) and H(2)O. Is also able to reduce hydroxylamine analogs such as methylhydroxylamine and hydroxyquinone. Might have a role as a scavenger of potentially toxic by-products of nitrate metabolism. The protein is Hydroxylamine reductase of Escherichia coli (strain K12).